A 971-amino-acid chain; its full sequence is Exportin-2 (971 aa).

An Importin N-terminal domain is found at 29–102 (AEKYLESVEG…KSSIINLMLR (74 aa)).

Belongs to the XPO2/CSE1 family.

It is found in the cytoplasm. It localises to the nucleus. In terms of biological role, export receptor for importin alpha. Mediates importin-alpha re-export from the nucleus to the cytoplasm after import substrates have been released into the nucleoplasm. The chain is Exportin-2 (cse1l) from Xenopus laevis (African clawed frog).